We begin with the raw amino-acid sequence, 266 residues long: Ribosomal RNA small subunit methyltransferase A (266 aa).

S-adenosyl-L-methionine contacts are provided by Asn11, Leu13, Gly37, Glu57, Asp85, and Asn104.

The protein belongs to the class I-like SAM-binding methyltransferase superfamily. rRNA adenine N(6)-methyltransferase family. RsmA subfamily.

Its subcellular location is the cytoplasm. The catalysed reaction is adenosine(1518)/adenosine(1519) in 16S rRNA + 4 S-adenosyl-L-methionine = N(6)-dimethyladenosine(1518)/N(6)-dimethyladenosine(1519) in 16S rRNA + 4 S-adenosyl-L-homocysteine + 4 H(+). Specifically dimethylates two adjacent adenosines (A1518 and A1519) in the loop of a conserved hairpin near the 3'-end of 16S rRNA in the 30S particle. May play a critical role in biogenesis of 30S subunits. The sequence is that of Ribosomal RNA small subunit methyltransferase A from Campylobacter jejuni (strain RM1221).